The following is a 340-amino-acid chain: L-threonine 3-dehydrogenase (340 aa).

A Zn(2+)-binding site is contributed by cysteine 38. Catalysis depends on charge relay system residues threonine 40 and histidine 43. Zn(2+)-binding residues include histidine 63, glutamate 64, cysteine 93, cysteine 96, cysteine 99, and cysteine 107. NAD(+)-binding positions include isoleucine 175, aspartate 195, arginine 200, 262–264, and 286–287; these read LGI and IY.

The protein belongs to the zinc-containing alcohol dehydrogenase family. As to quaternary structure, homotetramer. The cofactor is Zn(2+).

Its subcellular location is the cytoplasm. The catalysed reaction is L-threonine + NAD(+) = (2S)-2-amino-3-oxobutanoate + NADH + H(+). Its pathway is amino-acid degradation; L-threonine degradation via oxydo-reductase pathway; glycine from L-threonine: step 1/2. Catalyzes the NAD(+)-dependent oxidation of L-threonine to 2-amino-3-ketobutyrate. The sequence is that of L-threonine 3-dehydrogenase from Legionella pneumophila (strain Corby).